A 57-amino-acid chain; its full sequence is Small ribosomal subunit protein bS21 (57 aa).

Belongs to the bacterial ribosomal protein bS21 family.

The chain is Small ribosomal subunit protein bS21 from Lysinibacillus sphaericus (strain C3-41).